The chain runs to 278 residues: Small ribosomal subunit protein uS9m (278 aa).

The transit peptide at 1 to 10 (MFSRLSLFRR) directs the protein to the mitochondrion. A disordered region spans residues 259–278 (VERKKPGKKKARKMPTWVKR).

The protein belongs to the universal ribosomal protein uS9 family. As to quaternary structure, component of the mitochondrial small ribosomal subunit (mt-SSU). Mature yeast 74S mitochondrial ribosomes consist of a small (37S) and a large (54S) subunit. The 37S small subunit contains a 15S ribosomal RNA (15S mt-rRNA) and 34 different proteins. The 54S large subunit contains a 21S rRNA (21S mt-rRNA) and 46 different proteins.

It localises to the mitochondrion. Its function is as follows. Component of the mitochondrial ribosome (mitoribosome), a dedicated translation machinery responsible for the synthesis of mitochondrial genome-encoded proteins, including at least some of the essential transmembrane subunits of the mitochondrial respiratory chain. The mitoribosomes are attached to the mitochondrial inner membrane and translation products are cotranslationally integrated into the membrane. This chain is Small ribosomal subunit protein uS9m (MRPS9), found in Saccharomyces cerevisiae (strain ATCC 204508 / S288c) (Baker's yeast).